The sequence spans 150 residues: Probable FKBP-type 16 kDa peptidyl-prolyl cis-trans isomerase (150 aa).

Residues 14–88 enclose the PPIase FKBP-type domain; that stretch reads NTEVTLHFAL…PNPQNVQIIP (75 aa).

It belongs to the FKBP-type PPIase family.

It carries out the reaction [protein]-peptidylproline (omega=180) = [protein]-peptidylproline (omega=0). Its function is as follows. PPIases accelerate the folding of proteins. This chain is Probable FKBP-type 16 kDa peptidyl-prolyl cis-trans isomerase (yaaD), found in Pseudomonas fluorescens.